The sequence spans 158 residues: Small ribosomal subunit protein uS10m (158 aa).

The protein belongs to the universal ribosomal protein uS10 family.

The protein localises to the mitochondrion. The chain is Small ribosomal subunit protein uS10m (mrps-10) from Caenorhabditis briggsae.